Here is a 540-residue protein sequence, read N- to C-terminus: Putative serine protease F56F10.1 (540 aa).

The N-terminal stretch at 1–16 is a signal peptide; the sequence is MLRNLLLLLLPLLIEA. Asn-58 and Asn-87 each carry an N-linked (GlcNAc...) asparagine glycan. Residue Ser-182 is the Charge relay system of the active site. 6 N-linked (GlcNAc...) asparagine glycosylation sites follow: Asn-270, Asn-300, Asn-317, Asn-343, Asn-441, and Asn-449. Residue Asp-453 is the Charge relay system of the active site. An N-linked (GlcNAc...) asparagine glycan is attached at Asn-475. The Charge relay system role is filled by His-479.

Belongs to the peptidase S28 family.

The polypeptide is Putative serine protease F56F10.1 (Caenorhabditis elegans).